Reading from the N-terminus, the 847-residue chain is Matrin-3 (847 aa).

Ser2 bears the N-acetylserine mark. N6-acetyllysine; alternate is present on Lys3. Residue Lys3 forms a Glycyl lysine isopeptide (Lys-Gly) (interchain with G-Cter in SUMO2); alternate linkage. Ser4, Ser9, Ser11, Ser14, Ser22, Ser41, Ser118, and Ser126 each carry phosphoserine. Residues Lys132 and Lys146 each participate in a glycyl lysine isopeptide (Lys-Gly) (interchain with G-Cter in SUMO2) cross-link. 2 disordered regions span residues 146 to 174 (KRRR…YRVP) and 187 to 214 (DSFD…SGYY). Thr150 is modified (phosphothreonine). Residue Ser157 is modified to Phosphoserine. Tyr158 carries the post-translational modification Phosphotyrosine. The span at 160–174 (RDGRSATREPPYRVP) shows a compositional bias: basic and acidic residues. A phosphoserine mark is found at Ser164, Ser188, and Ser195. A compositionally biased stretch (basic and acidic residues) spans 201-214 (DYDHGSRSQESGYY). The residue at position 202 (Tyr202) is a Phosphotyrosine. Residues Ser206, Ser208, and Ser211 each carry the phosphoserine modification. Tyr219 bears the Phosphotyrosine mark. Ser234 is subject to Phosphoserine. A Glycyl lysine isopeptide (Lys-Gly) (interchain with G-Cter in SUMO2) cross-link involves residue Lys245. Ser264 carries the post-translational modification Phosphoserine. Lys269 is covalently cross-linked (Glycyl lysine isopeptide (Lys-Gly) (interchain with G-Cter in SUMO2)). A Phosphoserine modification is found at Ser275. The interval 342–394 (PFMLQQSTNPAPGILGPPPPSFHLGGPAVGPRGNLGAGNGNLQGPRHMQKGRV) is disordered. Positions 398-473 (RVVHIMDFQR…KPVRVHLSQK (76 aa)) constitute an RRM 1 domain. Residues Lys478, Lys487, and Lys491 each participate in a glycyl lysine isopeptide (Lys-Gly) (interchain with G-Cter in SUMO2) cross-link. The RRM 2 domain occupies 496 to 571 (RVIHLSNLPH…RCVKVDLSEK (76 aa)). Residues Ser509 and Ser511 each carry the phosphoserine modification. Lys515 is covalently cross-linked (Glycyl lysine isopeptide (Lys-Gly) (interchain with G-Cter in SUMO2)). Lys522 carries the post-translational modification N6-acetyllysine; alternate. Lys522 is covalently cross-linked (Glycyl lysine isopeptide (Lys-Gly) (interchain with G-Cter in SUMO2); alternate). The residue at position 533 (Ser533) is a Phosphoserine. Residues Lys554 and Lys555 each participate in a glycyl lysine isopeptide (Lys-Gly) (interchain with G-Cter in SUMO2) cross-link. Lys571 bears the N6-acetyllysine mark. The disordered stretch occupies residues 588–786 (KKDKSRKRSY…DEYRIGPYQP (199 aa)). Ser596, Ser598, Ser604, and Ser606 each carry phosphoserine. The segment covering 600 to 643 (DGKESPSDKKSKTDGSQKTESSTEGKEQEEKSGEDGEKDTKDDQ) has biased composition (basic and acidic residues). Residues Lys617 and Lys630 each participate in a glycyl lysine isopeptide (Lys-Gly) (interchain with G-Cter in SUMO2) cross-link. Positions 653–665 (ESEDELLVDEEEA) are enriched in acidic residues. A phosphoserine mark is found at Ser654, Ser671, Ser673, and Ser674. The segment covering 666 to 676 (AALLESGSSVG) has biased composition (low complexity). Position 679 is a phosphothreonine (Thr679). Ser689 carries the post-translational modification Phosphoserine. Over residues 689-704 (SDGKKEPSDKAVKKDG) the composition is skewed to basic and acidic residues. A Nuclear localization signal motif is present at residues 710 to 718 (AKKKLKKVD). Residues Lys719 and Lys736 each participate in a glycyl lysine isopeptide (Lys-Gly) (interchain with G-Cter in SUMO2) cross-link. Thr741 bears the Phosphothreonine mark. Phosphoserine occurs at positions 747, 759, and 766. A compositionally biased stretch (basic and acidic residues) spans 767–780 (DENKDDYTIPDEYR). Lys770 is covalently cross-linked (Glycyl lysine isopeptide (Lys-Gly) (interchain with G-Cter in SUMO2)). Residues 801 to 832 (FYCKLCSLFYTNEEVAKNTHCSSLPHYQKLKK) form a Matrin-type zinc finger. Position 836 is an N6-acetyllysine; alternate (Lys836). Lys836 participates in a covalent cross-link: Glycyl lysine isopeptide (Lys-Gly) (interchain with G-Cter in SUMO2); alternate.

As to quaternary structure, part of a complex consisting of SFPQ, NONO and MATR3. Interacts with AGO1 and AGO2. Part of a complex composed at least of ASH2L, EMSY, HCFC1, HSPA8, CCAR2, MATR3, MKI67, RBBP5, TUBB2A, WDR5 and ZNF335; this complex may have a histone H3-specific methyltransferase activity. Interacts with TARDBP. Part of the HDP-RNP complex composed of at least HEXIM1, PRKDC, XRCC5, XRCC6, paraspeckle proteins (SFPQ, NONO, PSPC1, RBM14, and MATR3) and NEAT1 RNA. Interacts with FUS. Interacts with IGF2BP1; the interaction is enhanced by SEPIN14P20 peptide RBPR. Interacts with IGF2BP2 and IGF2BP3. Interacts with RBPMS.

Its subcellular location is the nucleus matrix. Functionally, may play a role in transcription or may interact with other nuclear matrix proteins to form the internal fibrogranular network. In association with the SFPQ-NONO heteromer may play a role in nuclear retention of defective RNAs. Plays a role in the regulation of DNA virus-mediated innate immune response by assembling into the HDP-RNP complex, a complex that serves as a platform for IRF3 phosphorylation and subsequent innate immune response activation through the cGAS-STING pathway. Binds to N6-methyladenosine (m6A)-containing mRNAs and contributes to MYC stability by binding to m6A-containing MYC mRNAs. May bind to specific miRNA hairpins. In Homo sapiens (Human), this protein is Matrin-3 (MATR3).